A 436-amino-acid polypeptide reads, in one-letter code: GTPase Der (436 aa).

2 consecutive EngA-type G domains span residues 4–167 (PIVA…KEEE) and 176–351 (IRLS…ENHK). Residues 10–17 (GRPNVGKS), 57–61 (DTGGI), 119–122 (NKVD), 182–189 (GRPNVGKS), 229–233 (DTAGM), and 294–297 (NKWD) each bind GTP. In terms of domain architecture, KH-like spans 352-436 (KRVQSSTLNE…PVHIIARKRN (85 aa)).

It belongs to the TRAFAC class TrmE-Era-EngA-EngB-Septin-like GTPase superfamily. EngA (Der) GTPase family. Associates with the 50S ribosomal subunit.

In terms of biological role, GTPase that plays an essential role in the late steps of ribosome biogenesis. This is GTPase Der from Staphylococcus saprophyticus subsp. saprophyticus (strain ATCC 15305 / DSM 20229 / NCIMB 8711 / NCTC 7292 / S-41).